The sequence spans 267 residues: 3-deoxy-manno-octulosonate cytidylyltransferase (267 aa).

Belongs to the KdsB family.

The protein resides in the cytoplasm. It carries out the reaction 3-deoxy-alpha-D-manno-oct-2-ulosonate + CTP = CMP-3-deoxy-beta-D-manno-octulosonate + diphosphate. Its pathway is nucleotide-sugar biosynthesis; CMP-3-deoxy-D-manno-octulosonate biosynthesis; CMP-3-deoxy-D-manno-octulosonate from 3-deoxy-D-manno-octulosonate and CTP: step 1/1. The protein operates within bacterial outer membrane biogenesis; lipopolysaccharide biosynthesis. In terms of biological role, activates KDO (a required 8-carbon sugar) for incorporation into bacterial lipopolysaccharide in Gram-negative bacteria. This is 3-deoxy-manno-octulosonate cytidylyltransferase from Paraburkholderia phymatum (strain DSM 17167 / CIP 108236 / LMG 21445 / STM815) (Burkholderia phymatum).